The following is a 109-amino-acid chain: Tetracenomycin F2 cyclase (109 aa).

As to quaternary structure, homodimer.

It carries out the reaction tetracenomycin F2 + H(+) = tetracenomycin F1 + H2O. The protein operates within antibiotic biosynthesis; tetracenomycin C biosynthesis. Its function is as follows. Catalyzing the conversion of tetracenomycin F2 to tetracenomycin F1. The chain is Tetracenomycin F2 cyclase (tcmI) from Streptomyces glaucescens.